We begin with the raw amino-acid sequence, 195 residues long: Imidazoleglycerol-phosphate dehydratase (195 aa).

The protein belongs to the imidazoleglycerol-phosphate dehydratase family.

It localises to the cytoplasm. It carries out the reaction D-erythro-1-(imidazol-4-yl)glycerol 3-phosphate = 3-(imidazol-4-yl)-2-oxopropyl phosphate + H2O. It participates in amino-acid biosynthesis; L-histidine biosynthesis; L-histidine from 5-phospho-alpha-D-ribose 1-diphosphate: step 6/9. The polypeptide is Imidazoleglycerol-phosphate dehydratase (Aromatoleum aromaticum (strain DSM 19018 / LMG 30748 / EbN1) (Azoarcus sp. (strain EbN1))).